Reading from the N-terminus, the 468-residue chain is Mannan endo-1,4-beta-mannosidase 3 (468 aa).

The signal sequence occupies residues 1-23 (MTVRPRPAAAAIIIAAVFGAAAA). Trp-86 lines the substrate pocket. A glycan (N-linked (GlcNAc...) asparagine) is linked at Asn-152. Residue Asn-201 participates in substrate binding. Glu-202 serves as the catalytic Proton donor. Position 281 (Tyr-281) interacts with substrate. N-linked (GlcNAc...) asparagine glycosylation is present at Asn-300. Glu-321 serves as the catalytic Nucleophile. Asn-333 is a glycosylation site (N-linked (GlcNAc...) asparagine). 2 residues coordinate substrate: Trp-364 and Asp-371. The interval 415 to 436 (LRRRRRRPASSHRKTRLGSGGD) is disordered. Positions 416–430 (RRRRRRPASSHRKTR) are enriched in basic residues.

It belongs to the glycosyl hydrolase 5 (cellulase A) family. As to expression, expressed in seeds.

The protein localises to the secreted. The enzyme catalyses Random hydrolysis of (1-&gt;4)-beta-D-mannosidic linkages in mannans, galactomannans and glucomannans.. This Oryza sativa subsp. japonica (Rice) protein is Mannan endo-1,4-beta-mannosidase 3 (MAN3).